A 308-amino-acid polypeptide reads, in one-letter code: RNA pseudouridylate synthase domain-containing protein 1 (308 aa).

Met1 carries the N-acetylmethionine modification. Asp67 is a catalytic residue. The interval 257–292 (APDPDPSEGGPGPCSPCTPLPGPGRPPPPPETEVQR) is disordered. A compositionally biased stretch (pro residues) spans 269–287 (PCSPCTPLPGPGRPPPPPE).

Belongs to the pseudouridine synthase RluA family.

The sequence is that of RNA pseudouridylate synthase domain-containing protein 1 (RPUSD1) from Bos taurus (Bovine).